Reading from the N-terminus, the 105-residue chain is MTMMITTGNSFEGKVIKQYLGIVRGIVVRSPTISQGLMGGLKSIVGGKIGAYSQMCEHAREEAFQLMIEHAQALNANGIIAMRYDTGEIGQAGTEVLCYGTAVII.

It belongs to the UPF0145 family.

This is UPF0145 protein LPC_0273 from Legionella pneumophila (strain Corby).